A 242-amino-acid chain; its full sequence is DNA repair protein RecO (242 aa).

The protein belongs to the RecO family.

Involved in DNA repair and RecF pathway recombination. In Xanthobacter autotrophicus (strain ATCC BAA-1158 / Py2), this protein is DNA repair protein RecO.